The following is a 162-amino-acid chain: Nucleotide-binding protein SAV_4896 (162 aa).

The protein belongs to the YajQ family.

In terms of biological role, nucleotide-binding protein. The polypeptide is Nucleotide-binding protein SAV_4896 (Streptomyces avermitilis (strain ATCC 31267 / DSM 46492 / JCM 5070 / NBRC 14893 / NCIMB 12804 / NRRL 8165 / MA-4680)).